The chain runs to 600 residues: Cytidine monophosphate-N-acetylneuraminic acid hydroxylase (600 aa).

The region spanning 9–107 (LSPVEVASLK…VEMDENNRLL (99 aa)) is the Rieske domain. Residues Cys49, His51, Cys70, and His73 each contribute to the [2Fe-2S] cluster site.

This sequence belongs to the CMP-Neu5Ac hydroxylase family. The cofactor is [2Fe-2S] cluster.

The protein resides in the cytoplasm. The enzyme catalyses CMP-N-acetyl-beta-neuraminate + 2 Fe(II)-[cytochrome b5] + O2 + 2 H(+) = CMP-N-glycoloyl-beta-neuraminate + 2 Fe(III)-[cytochrome b5] + H2O. Its pathway is amino-sugar metabolism; N-acetylneuraminate metabolism. In terms of biological role, sialic acids are components of carbohydrate chains of glycoconjugates and are involved in cell-cell recognition and cell-pathogen interactions. Catalyzes the conversion of CMP-N-acetylneuraminic acid (CMP-Neu5Ac) into its hydroxylated derivative CMP-N-glycolylneuraminic acid (CMP-Neu5Gc), a sialic acid abundantly expressed at the surface of many cells. This Pan paniscus (Pygmy chimpanzee) protein is Cytidine monophosphate-N-acetylneuraminic acid hydroxylase (CMAH).